We begin with the raw amino-acid sequence, 374 residues long: Phosphoserine aminotransferase (374 aa).

L-glutamate is bound at residue Arg-46. Pyridoxal 5'-phosphate is bound by residues 80-81, Phe-104, Thr-150, Asp-174, and Gln-197; that span reads AT. Position 198 is an N6-(pyridoxal phosphate)lysine (Lys-198). 249-250 is a pyridoxal 5'-phosphate binding site; it reads NT.

The protein belongs to the class-V pyridoxal-phosphate-dependent aminotransferase family. SerC subfamily. In terms of assembly, homodimer. The cofactor is pyridoxal 5'-phosphate.

The protein localises to the cytoplasm. The catalysed reaction is O-phospho-L-serine + 2-oxoglutarate = 3-phosphooxypyruvate + L-glutamate. It carries out the reaction 4-(phosphooxy)-L-threonine + 2-oxoglutarate = (R)-3-hydroxy-2-oxo-4-phosphooxybutanoate + L-glutamate. Its pathway is amino-acid biosynthesis; L-serine biosynthesis; L-serine from 3-phospho-D-glycerate: step 2/3. It participates in cofactor biosynthesis; pyridoxine 5'-phosphate biosynthesis; pyridoxine 5'-phosphate from D-erythrose 4-phosphate: step 3/5. Its function is as follows. Catalyzes the reversible conversion of 3-phosphohydroxypyruvate to phosphoserine and of 3-hydroxy-2-oxo-4-phosphonooxybutanoate to phosphohydroxythreonine. In Nocardioides sp. (strain ATCC BAA-499 / JS614), this protein is Phosphoserine aminotransferase.